We begin with the raw amino-acid sequence, 308 residues long: Ribosomal RNA small subunit methyltransferase H (308 aa).

Residues Gly-36–His-38, Asp-55, Phe-86, Asp-103, and Gln-110 contribute to the S-adenosyl-L-methionine site.

The protein belongs to the methyltransferase superfamily. RsmH family.

Its subcellular location is the cytoplasm. It carries out the reaction cytidine(1402) in 16S rRNA + S-adenosyl-L-methionine = N(4)-methylcytidine(1402) in 16S rRNA + S-adenosyl-L-homocysteine + H(+). Specifically methylates the N4 position of cytidine in position 1402 (C1402) of 16S rRNA. The polypeptide is Ribosomal RNA small subunit methyltransferase H (Helicobacter pylori (strain Shi470)).